The chain runs to 1471 residues: Myosin-51 (1471 aa).

The Myosin N-terminal SH3-like domain occupies serine 7 to isoleucine 61. In terms of domain architecture, Myosin motor spans glutamate 65–arginine 749. Glycine 159 to threonine 166 is an ATP binding site. Residues leucine 628–glutamate 650 are actin-binding. 6 IQ domains span residues serine 753–glutamine 773, valine 776–glutamate 796, glutamate 801–leucine 821, isoleucine 824–isoleucine 844, glutamate 849–arginine 869, and lysine 872–arginine 892. Positions lysine 909–lysine 952 form a coiled coil. A Dilute domain is found at glutamate 1171–lysine 1417.

It belongs to the TRAFAC class myosin-kinesin ATPase superfamily. Myosin family.

It is found in the cytoplasm. Involved in cytokinesis. The polypeptide is Myosin-51 (myo51) (Schizosaccharomyces pombe (strain 972 / ATCC 24843) (Fission yeast)).